The sequence spans 200 residues: Methylamine utilization protein MauD (200 aa).

Residues Phe-4–Leu-24 form a helical membrane-spanning segment. The region spanning Pro-49–Thr-183 is the Thioredoxin domain.

Its subcellular location is the membrane. It participates in one-carbon metabolism; methylamine degradation. Its function is as follows. May be specifically involved in the processing, transport, and/or maturation of the MADH beta-subunit. This chain is Methylamine utilization protein MauD (mauD), found in Paracoccus denitrificans.